The sequence spans 559 residues: CTP synthase (559 aa).

Residues 1–270 (MTKFVFVTGG…DGLICDKLRI (270 aa)) form an amidoligase domain region. Position 13 (Ser-13) interacts with CTP. Ser-13 is a binding site for UTP. ATP-binding positions include 14-19 (SLGKGI) and Asp-71. The Mg(2+) site is built by Asp-71 and Glu-144. CTP contacts are provided by residues 151-153 (DIE), 191-196 (KTKPTQ), and Lys-227. Residues 191–196 (KTKPTQ) and Lys-227 contribute to the UTP site. Positions 295 to 547 (SIAMVGKYVD…IKAALDHKAR (253 aa)) constitute a Glutamine amidotransferase type-1 domain. Residue Gly-356 participates in L-glutamine binding. Cys-383 functions as the Nucleophile; for glutamine hydrolysis in the catalytic mechanism. Residues 384–387 (LGMQ), Glu-407, and Arg-473 each bind L-glutamine. Active-site residues include His-520 and Glu-522.

It belongs to the CTP synthase family. In terms of assembly, homotetramer.

It carries out the reaction UTP + L-glutamine + ATP + H2O = CTP + L-glutamate + ADP + phosphate + 2 H(+). The catalysed reaction is L-glutamine + H2O = L-glutamate + NH4(+). It catalyses the reaction UTP + NH4(+) + ATP = CTP + ADP + phosphate + 2 H(+). It functions in the pathway pyrimidine metabolism; CTP biosynthesis via de novo pathway; CTP from UDP: step 2/2. Allosterically activated by GTP, when glutamine is the substrate; GTP has no effect on the reaction when ammonia is the substrate. The allosteric effector GTP functions by stabilizing the protein conformation that binds the tetrahedral intermediate(s) formed during glutamine hydrolysis. Inhibited by the product CTP, via allosteric rather than competitive inhibition. In terms of biological role, catalyzes the ATP-dependent amination of UTP to CTP with either L-glutamine or ammonia as the source of nitrogen. Regulates intracellular CTP levels through interactions with the four ribonucleotide triphosphates. The sequence is that of CTP synthase from Variovorax paradoxus (strain S110).